We begin with the raw amino-acid sequence, 512 residues long: Probable DNA ligase (512 aa).

Residue Asp217 participates in ATP binding. The active-site N6-AMP-lysine intermediate is the Lys219. ATP-binding residues include Arg224, Arg239, Glu268, Phe306, Arg377, and Lys383.

The protein belongs to the ATP-dependent DNA ligase family. Mg(2+) serves as cofactor.

The catalysed reaction is ATP + (deoxyribonucleotide)n-3'-hydroxyl + 5'-phospho-(deoxyribonucleotide)m = (deoxyribonucleotide)n+m + AMP + diphosphate.. Functionally, DNA ligase that seals nicks in double-stranded DNA during DNA replication, DNA recombination and DNA repair. The chain is Probable DNA ligase from Beutenbergia cavernae (strain ATCC BAA-8 / DSM 12333 / CCUG 43141 / JCM 11478 / NBRC 16432 / NCIMB 13614 / HKI 0122).